Consider the following 23-residue polypeptide: Acidic phospholipase CHA-E6a (23 aa).

Belongs to the phospholipase A2 family. Group II subfamily. D49 sub-subfamily. It depends on Ca(2+) as a cofactor. In terms of processing, contains 7 disulfide bonds. As to expression, expressed by the venom gland.

It localises to the secreted. It catalyses the reaction a 1,2-diacyl-sn-glycero-3-phosphocholine + H2O = a 1-acyl-sn-glycero-3-phosphocholine + a fatty acid + H(+). Functionally, snake venom phospholipase A2 (PLA2) that shows high lipolytic (1048 umol/mg/min) and weak ADP-induced platelet aggregation activities. Also shows weak anticoagulant activity (IC(50) is less than 1.0 uM). PLA2 catalyzes the calcium-dependent hydrolysis of the 2-acyl groups in 3-sn-phosphoglycerides. The polypeptide is Acidic phospholipase CHA-E6a (Crotalus horridus (Timber rattlesnake)).